Here is a 1792-residue protein sequence, read N- to C-terminus: Brefeldin A-inhibited guanine nucleotide-exchange protein 2 (1792 aa).

At M1 the chain carries N-acetylmethionine. Residues 2–224 (QESQTKSMFV…KPQSPVIQAT (223 aa)) are DCB; DCB:DCB domain and DCB:HUS domain interaction. Residues 207–294 (ELEKPMQSKP…SRGTDSGAQE (88 aa)) are disordered. Phosphoserine occurs at positions 214, 218, and 227. Residues 214–225 (SKPQSPVIQATA) show a composition bias toward polar residues. Positions 233–243 (LKQSQAQSKPT) are enriched in polar residues. The residue at position 244 (T244) is a Phosphothreonine. A phosphoserine mark is found at S355 and S356. The tract at residues 515–535 (ADAQCVVDIYVNYDCDLNAAN) is HUS; DCB:HUS domain interaction. S621 carries the phosphoserine modification. A Phosphothreonine modification is found at T623. At S624 the chain carries Phosphoserine. T633 is modified (phosphothreonine). Residues 661-792 (FNKKPKRGIQ…IIMLTTDLHS (132 aa)) enclose the SEC7 domain. Residues S707, S1518, S1520, S1521, S1532, S1535, S1541, and S1789 each carry the phosphoserine modification.

Homodimer. Interacts with ARFGEF1/BIG1; both proteins are probably part of the same or very similar macromolecular complexes. Interacts with PRKAR1A, PRKAR2A, PRKAR1B, PRKAR2B, PPP1CC, PDE3A, TNFRSF1A, MYCBP and EXOC7. Interacts with GABRB1, GABRB2 and GABRB3. In vitro phosphorylated by PKA reducing its GEF activity and dephosphorylated by phosphatase PP1.

The protein resides in the cytoplasm. Its subcellular location is the membrane. It is found in the golgi apparatus. The protein localises to the perinuclear region. It localises to the trans-Golgi network. The protein resides in the endosome. Its subcellular location is the cytoskeleton. It is found in the microtubule organizing center. The protein localises to the centrosome. It localises to the cell projection. The protein resides in the dendrite. Its subcellular location is the cytoplasmic vesicle. It is found in the synapse. Its activity is regulated as follows. Inhibited by brefeldin A. Promotes guanine-nucleotide exchange on ARF1 and ARF3 and to a lower extent on ARF5 and ARF6. Promotes the activation of ARF1/ARF5/ARF6 through replacement of GDP with GTP. Involved in the regulation of Golgi vesicular transport. Required for the integrity of the endosomal compartment. Involved in trafficking from the trans-Golgi network (TGN) to endosomes and is required for membrane association of the AP-1 complex and GGA1. Seems to be involved in recycling of the transferrin receptor from recycling endosomes to the plasma membrane. Probably is involved in the exit of GABA(A) receptors from the endoplasmic reticulum. Involved in constitutive release of tumor necrosis factor receptor 1 via exosome-like vesicles; the function seems to involve PKA and specifically PRKAR2B. Proposed to act as A kinase-anchoring protein (AKAP) and may mediate crosstalk between Arf and PKA pathways. The polypeptide is Brefeldin A-inhibited guanine nucleotide-exchange protein 2 (Arfgef2) (Mus musculus (Mouse)).